Consider the following 260-residue polypeptide: Adenosylcobinamide-GDP ribazoletransferase (260 aa).

6 helical membrane passes run 7–27 (WYFLWGGDSVGAAILFYTRLP), 45–65 (LMGLLLSLILLALDRGLHWLG), 117–137 (AYGVMAIAVVLLLKTFALASF), 145–165 (WALIMALGWGRWGQLLAIALY), 187–207 (LLLGTMIIVFGGVGMGYALAI), and 210–230 (WLILGATGSSALIAWAVGRWF).

The protein belongs to the CobS family. It depends on Mg(2+) as a cofactor.

It localises to the cell inner membrane. It carries out the reaction alpha-ribazole + adenosylcob(III)inamide-GDP = adenosylcob(III)alamin + GMP + H(+). The catalysed reaction is alpha-ribazole 5'-phosphate + adenosylcob(III)inamide-GDP = adenosylcob(III)alamin 5'-phosphate + GMP + H(+). Its pathway is cofactor biosynthesis; adenosylcobalamin biosynthesis; adenosylcobalamin from cob(II)yrinate a,c-diamide: step 7/7. In terms of biological role, joins adenosylcobinamide-GDP and alpha-ribazole to generate adenosylcobalamin (Ado-cobalamin). Also synthesizes adenosylcobalamin 5'-phosphate from adenosylcobinamide-GDP and alpha-ribazole 5'-phosphate. This is Adenosylcobinamide-GDP ribazoletransferase from Synechocystis sp. (strain ATCC 27184 / PCC 6803 / Kazusa).